The chain runs to 509 residues: MVQISNVWGFGLAIMASLAAAAPKDCPDGLCLRTRANLSPLEVSQELGPLISNASSIFGPSDSRWANATARYQQYAAPKFTVVVRVARESDVSVIIKYANRNSLPFYAVNRGHGLPISQAKFSGLEIDMQLLTGITIQSNGKSALFQGGTYDQQVMDTLWEEGYVTTTGSCGCVGMLGPALGGGHGRQQGFHGLISDNILKLNVVLADGTTATVSNTSHTDLFWAMKGAGHNFGVVTSFEMSIYPTQVHSWYYKNYVFTQDKLEDLFEQLNVLQGNGTQPVKMAAQYGIYMMDSTVSATEAIIWWTFGYAGSQSEAQQYLTPFDDLNPLSSTDGNVPFPEVPNVQGTGINNATCDKGLERIVGPAGLQVYNATAQRQIYDLFNRNVKSYPELAASAVVMEGYSVEAVRKVDSDSSAYPMRDDYLLMQTTVSYSPNSTLDNVAIDWVTENQKFWNEGQPTRKPTAYVNYASGRESLEAMYGYEPWRLERLRKLKAKYDPEGRFSYYNPIV.

The N-terminal stretch at M1–A21 is a signal peptide. Positions Y75 to T246 constitute an FAD-binding PCMH-type domain.

This sequence belongs to the oxygen-dependent FAD-linked oxidoreductase family. The cofactor is FAD.

It carries out the reaction (2S,9S)-annullatin H + 2 A = (2S,9S)-annullatin D + 2 AH2. Its pathway is secondary metabolite biosynthesis. In terms of biological role, cytochrome P450 monooxygenase; part of the gene cluster that mediates the biosynthesis of annullatin D, an alkylated aromatic polyketide with a fused dihydrobenzofuran lactone ring system that exhibits potent agonistic activities toward the cannabinoid receptors. Within the pathway, anuG is responsible for the five-member lactone ring formation in (2S, 9S)-annullatin D via oxidative lactonization between the two hydroxyl groups. The annullatin backbone 2-hydroxymethyl-3-pentylphenol is assembled from one acetyl-CoA starter unit and 5 malonyl-CoA elongation units by cooperation of the highly reducing polyketide synthase anuA, the short-chain dehydrogenase anuB and the oxidoreductase anuC, before being hydroxylated at the C-5 alkyl chain by the cytochrome P450 monooxygenase anuE to form (8S)-annullatin E. The prenyltransferase anuH subsequently installs one isoprenyl group at the benzene ring to form (8S)-annullatin J. Enzymatic or nonenzymatic dihydro-benzofuran ring formation between the prenyl and the phenolic hydroxyl groups in (8S)-annullatin J results in two diastereomers (2S,9S)-annullatin H and compound 12. The intermediate (2S,9S)-annullatin H is then converted to (2S,9S)-annullatin D by the FAD-linked oxidoreductase anuG-catalyzed five-member lactone ring formation. The isomer 12 acts as a substrate for the short-chain dehydrogenase anuF and is oxidized to (2R)-annullatin F, which is subsequently acetylated by an acetyltransferase leading to (2R)-annullatin G formation. The remaining enzymes identified within the cluster, anuD, anuI and anuJ, seem not to be involved in annullatin biosynthesis. In Penicillium roqueforti (strain FM164), this protein is FAD-linked oxidoreductase anuG.